A 216-amino-acid polypeptide reads, in one-letter code: Ribosomal RNA large subunit methyltransferase E (216 aa).

G60, W62, D80, D96, and D121 together coordinate S-adenosyl-L-methionine. The Proton acceptor role is filled by K161.

It belongs to the class I-like SAM-binding methyltransferase superfamily. RNA methyltransferase RlmE family.

The protein resides in the cytoplasm. It carries out the reaction uridine(2552) in 23S rRNA + S-adenosyl-L-methionine = 2'-O-methyluridine(2552) in 23S rRNA + S-adenosyl-L-homocysteine + H(+). Its function is as follows. Specifically methylates the uridine in position 2552 of 23S rRNA at the 2'-O position of the ribose in the fully assembled 50S ribosomal subunit. In Pseudomonas savastanoi pv. phaseolicola (strain 1448A / Race 6) (Pseudomonas syringae pv. phaseolicola (strain 1448A / Race 6)), this protein is Ribosomal RNA large subunit methyltransferase E.